The primary structure comprises 88 residues: Small ribosomal subunit protein bS16 (88 aa).

This sequence belongs to the bacterial ribosomal protein bS16 family.

This chain is Small ribosomal subunit protein bS16, found in Anaeromyxobacter sp. (strain Fw109-5).